We begin with the raw amino-acid sequence, 113 residues long: Large ribosomal subunit protein bL17 (113 aa).

Belongs to the bacterial ribosomal protein bL17 family. In terms of assembly, part of the 50S ribosomal subunit. Contacts protein L32.

In Alkaliphilus metalliredigens (strain QYMF), this protein is Large ribosomal subunit protein bL17.